Here is a 166-residue protein sequence, read N- to C-terminus: Myosin regulatory light chain 2, ventricular/cardiac muscle isoform (166 aa).

At Ser2 the chain carries N,N,N-trimethylserine. Ser14, Ser15, and Ser19 each carry phosphoserine. 3 EF-hand domains span residues 24-59, 94-129, and 130-165; these read TQIQEFKEAFTIMDQNRDGFIDKNDLRDTFAALGRV, DPEETILNAFKVFDPEGKGSLKADYVREMLTTQAER, and FSKEEIDQMFAAFPPDVTGNLDYKNLVHIITHGEEK. Residues Asp37, Asn39, Asp41, and Asp48 each coordinate Ca(2+). Thr52 bears the Phosphothreonine mark.

Myosin is a hexamer of 2 heavy chains and 4 light chains. Interacts with MYOC. Post-translationally, N-terminus is methylated by METTL11A/NTM1. Phosphorylated by MYLK3 and MYLK2; promotes cardiac muscle contraction and function. Dephosphorylated by PPP1CB complexed to PPP1R12B. The phosphorylated form in adult is expressed as gradients across the heart from endocardium (low phosphorylation) to epicardium (high phosphorylation); regulates cardiac torsion and workload distribution. As to expression, abundantly expressed in both cardiac and slow skeletal muscle (soleus), with no detectable expression in fast skeletal muscle (vastus lateralis) or non-muscle tissue.

Its subcellular location is the cytoplasm. The protein resides in the myofibril. It localises to the sarcomere. The protein localises to the a band. Its function is as follows. Contractile protein that plays a role in heart development and function. Following phosphorylation, plays a role in cross-bridge cycling kinetics and cardiac muscle contraction by increasing myosin lever arm stiffness and promoting myosin head diffusion; as a consequence of the increase in maximum contraction force and calcium sensitivity of contraction force. These events altogether slow down myosin kinetics and prolong duty cycle resulting in accumulated myosins being cooperatively recruited to actin binding sites to sustain thin filament activation as a means to fine-tune myofilament calcium sensitivity to force. During cardiogenesis plays an early role in cardiac contractility by promoting cardiac myofibril assembly. This is Myosin regulatory light chain 2, ventricular/cardiac muscle isoform from Rattus norvegicus (Rat).